A 414-amino-acid chain; its full sequence is Alanine--glyoxylate aminotransferase (414 aa).

The transit peptide at 1–23 (MFRMLAKASVTLGSRAAGWVRTM) directs the protein to the mitochondrion. Lysine 231 bears the N6-(pyridoxal phosphate)lysine mark. An N6-acetyllysine; alternate modification is found at lysine 247. Lysine 247 is subject to N6-succinyllysine; alternate. The residue at position 256 (lysine 256) is an N6-acetyllysine. The residue at position 330 (lysine 330) is an N6-acetyllysine; alternate. Lysine 330 bears the N6-succinyllysine; alternate mark. Lysine 334 is modified (N6-acetyllysine). Arginine 382 lines the substrate pocket. A Microbody targeting signal motif is present at residues 412–414 (NKL).

This sequence belongs to the class-V pyridoxal-phosphate-dependent aminotransferase family. Homodimer. Requires pyridoxal 5'-phosphate as cofactor.

The protein localises to the peroxisome. It is found in the mitochondrion matrix. The enzyme catalyses L-serine + pyruvate = 3-hydroxypyruvate + L-alanine. It carries out the reaction glyoxylate + L-alanine = glycine + pyruvate. Functionally, catalyzes the transamination of glyoxylate to glycine and contributes to the glyoxylate detoxification. Its function is as follows. Catalyzes the transamination between L-serine and pyruvate and weakly contributes to gluconeogenesis from the L-serine metabolism. The protein is Alanine--glyoxylate aminotransferase of Mus musculus (Mouse).